Reading from the N-terminus, the 669-residue chain is Probable serine/threonine-protein kinase DDB_G0291918 (669 aa).

Residues tyrosine 13–leucine 360 form the Protein kinase domain. ATP contacts are provided by residues leucine 19 to valine 27 and lysine 42. Catalysis depends on aspartate 141, which acts as the Proton acceptor. Residues glutamine 396 to glutamine 405 are compositionally biased toward low complexity. Disordered regions lie at residues glutamine 396 to phenylalanine 518 and phenylalanine 530 to arginine 550. A compositionally biased stretch (polar residues) spans lysine 406–histidine 418. Low complexity-rich tracts occupy residues asparagine 419–asparagine 449 and glutamine 457–aspartate 494.

This sequence belongs to the protein kinase superfamily. Ser/Thr protein kinase family.

It carries out the reaction L-seryl-[protein] + ATP = O-phospho-L-seryl-[protein] + ADP + H(+). It catalyses the reaction L-threonyl-[protein] + ATP = O-phospho-L-threonyl-[protein] + ADP + H(+). The protein is Probable serine/threonine-protein kinase DDB_G0291918 of Dictyostelium discoideum (Social amoeba).